Reading from the N-terminus, the 522-residue chain is Neuropeptide FF receptor 2 (522 aa).

The Extracellular segment spans residues 1–147 (MNSFFGTPAA…NYYLHQPQVA (147 aa)). The interval 25–49 (KEAGRERRALSVQQRGGPAWSGSLE) is disordered. 3 N-linked (GlcNAc...) asparagine glycosylation sites follow: N110, N122, and N133. Residues 148–168 (AIFIISYFLIFFLCMMGNTVV) form a helical membrane-spanning segment. Residues 169 to 184 (CFIVMRNKHMHTVTNL) lie on the Cytoplasmic side of the membrane. The chain crosses the membrane as a helical span at residues 185-205 (FILNLAISDLLVGIFCMPITL). Topologically, residues 206 to 221 (LDNIIAGWPFGNTMCK) are extracellular. A disulfide bridge connects residues C220 and C308. The chain crosses the membrane as a helical span at residues 222–242 (ISGLVQGISVAASVFTLVAIA). Over 243-262 (VDRFQCVVYPFKPKLTIKTA) the chain is Cytoplasmic. A helical transmembrane segment spans residues 263 to 283 (FVIIMIIWVLAITIMSPSAVM). Topologically, residues 284 to 319 (LHVQEEKYYRVRLNSQNKTSPVYWCREDWPNQEMRK) are extracellular. An N-linked (GlcNAc...) asparagine glycan is attached at N300. Residues 320-340 (IYTTVLFANIYLAPLSLIVIM) traverse the membrane as a helical segment. Residues 341 to 377 (YGRIGISLFRAAVPHTGRKNQEQWHVVSRKKQKIIKM) are Cytoplasmic-facing. Residues 378 to 398 (LLIVALLFILSWLPLWTLMML) traverse the membrane as a helical segment. The Extracellular segment spans residues 399–413 (SDYADLSPNELQIIN). A helical transmembrane segment spans residues 414 to 434 (IYIYPFAHWLAFGNSSVNPII). Residues 435 to 522 (YGFFNENFRR…LKETTNSSEI (88 aa)) are Cytoplasmic-facing.

The protein belongs to the G-protein coupled receptor 1 family. In terms of tissue distribution, isoform 1 is abundant in placenta. Relatively highly expressed in thymus, testis, and small intestine. Expressed at low levels in several tissues including spleen, prostate, brain, heart, ovary, colon, kidney, lung, liver and pancreas and not expressed in skeletal muscle and leukocytes. Isoform 2 expression is highest in placenta (but at relatively low level compared to isoform 1). Very low level of expression in numerous tissues including adipose tissue and many brain regions. Isoform 3 is expressed in brain and heart and, at lower levels, in kidney, liver, lung and pancreas.

It localises to the cell membrane. Receptor for NPAF (A-18-F-amide) and NPFF (F-8-F-amide) neuropeptides, also known as morphine-modulating peptides. Can also be activated by a variety of naturally occurring or synthetic FMRF-amide like ligands. This receptor mediates its action by association with G proteins that activate a phosphatidylinositol-calcium second messenger system. This is Neuropeptide FF receptor 2 from Homo sapiens (Human).